We begin with the raw amino-acid sequence, 466 residues long: Exodeoxyribonuclease 7 large subunit (466 aa).

The protein belongs to the XseA family. In terms of assembly, heterooligomer composed of large and small subunits.

It is found in the cytoplasm. It carries out the reaction Exonucleolytic cleavage in either 5'- to 3'- or 3'- to 5'-direction to yield nucleoside 5'-phosphates.. Its function is as follows. Bidirectionally degrades single-stranded DNA into large acid-insoluble oligonucleotides, which are then degraded further into small acid-soluble oligonucleotides. The sequence is that of Exodeoxyribonuclease 7 large subunit from Vesicomyosocius okutanii subsp. Calyptogena okutanii (strain HA).